The sequence spans 105 residues: Replication restart protein PriB (105 aa).

The SSB domain occupies M1 to D102.

Belongs to the PriB family. As to quaternary structure, homodimer. Interacts with PriA and DnaT. Component of the replication restart primosome. Primosome assembly occurs via a 'hand-off' mechanism. PriA binds to replication forks, subsequently PriB then DnaT bind; DnaT then displaces ssDNA to generate the helicase loading substrate.

Its function is as follows. Involved in the restart of stalled replication forks, which reloads the replicative helicase on sites other than the origin of replication; the PriA-PriB pathway is the major replication restart pathway. During primosome assembly it facilitates complex formation between PriA and DnaT on DNA; stabilizes PriA on DNA. Stimulates the DNA unwinding activity of PriA helicase. This chain is Replication restart protein PriB, found in Yersinia pseudotuberculosis serotype O:1b (strain IP 31758).